The sequence spans 380 residues: Enoyl-[acyl-carrier-protein] reductase, mitochondrial (380 aa).

The N-terminal 9 residues, 1 to 9 (MLPTFKRYM), are a transit peptide targeting the mitochondrion. Y73 serves as the catalytic Proton donor. Residues N157, 185 to 188 (TSSV), 208 to 210 (RDR), 283 to 286 (YGGM), and 308 to 310 (YWV) each bind NADP(+). The residue at position 339 (S339) is a Phosphoserine. K373 contacts NADP(+).

The protein belongs to the zinc-containing alcohol dehydrogenase family. Quinone oxidoreductase subfamily. Homodimer or in a complex with other proteins. Interacts with ARS1.

Its subcellular location is the mitochondrion matrix. It catalyses the reaction a 2,3-saturated acyl-[ACP] + NADP(+) = a (2E)-enoyl-[ACP] + NADPH + H(+). The enzyme catalyses (2E,4E)-hexadienoyl-CoA + NADPH + H(+) = (4E)-hexenoyl-CoA + NADP(+). The catalysed reaction is (2E)-hexenoyl-CoA + NADPH + H(+) = hexanoyl-CoA + NADP(+). Catalyzes the NADPH-dependent reduction of trans-2-enoyl thioesters in mitochondrial fatty acid synthesis (fatty acid synthesis type II). Fatty acid chain elongation in mitochondria uses acyl carrier protein (ACP) as an acyl group carrier, but the enzyme accepts both ACP and CoA thioesters as substrates in vitro. Required for respiration and the maintenance of the mitochondrial compartment. This Saccharomyces cerevisiae (strain ATCC 204508 / S288c) (Baker's yeast) protein is Enoyl-[acyl-carrier-protein] reductase, mitochondrial (ETR1).